The sequence spans 372 residues: Inner membrane protein YbiR (372 aa).

Residues 1 to 13 (MSLPFLRTLQGDR) lie on the Periplasmic side of the membrane. 2 consecutive transmembrane segments (helical) span residues 14 to 34 (FFQLLILVGIGLSFFVPFAPK) and 35 to 55 (SWPAAIDWHTIITLSGLMLLT). Over 56–85 (KGVELSGYFDVLGRKMVRRFATERRLAMFM) the chain is Periplasmic. The chain crosses the membrane as a helical span at residues 86-106 (VLAAALLSTFLTNDVALFIVV). At 107-122 (PLTITLKRLCEIPVNR) the chain is on the cytoplasmic side. Residues 123 to 143 (LIIFEALAVNAGSLLTPIGNP) traverse the membrane as a helical segment. The Periplasmic portion of the chain corresponds to 144 to 155 (QNILIWGRSGLS). Residues 156–176 (FAGFIAQMAPLAGAMMLTLLL) traverse the membrane as a helical segment. Residues 177 to 208 (LCWCCFPGKAMQYHTGVQTPEWKPRLVWSCLG) lie on the Cytoplasmic side of the membrane. Residues 209-229 (LYIVFLTALEFKQELWGLVIV) traverse the membrane as a helical segment. Residues 230–247 (AAGFALLARRVVLSVDWT) are Periplasmic-facing. The chain crosses the membrane as a helical span at residues 248 to 268 (LLLVFMAMFIDVHLLTQLPAL). Over 269–283 (QGVLGNVSHLSEPGL) the chain is Cytoplasmic. Residues 284–304 (WLTAIGLSQVISNVPSTILLL) traverse the membrane as a helical segment. Residues 305 to 309 (NYVPP) lie on the Periplasmic side of the membrane. A helical membrane pass occupies residues 310 to 330 (SLLLVWAVNVGGFGLLPGSLA). Over 331–348 (NLIALRMANDRRIWWRFH) the chain is Cytoplasmic. A helical membrane pass occupies residues 349–369 (LYSIPMLLWAALVGYVLLVIL). At 370–372 (PAN) the chain is on the periplasmic side.

The protein belongs to the CitM (TC 2.A.11) transporter family.

It localises to the cell inner membrane. This Escherichia coli (strain K12) protein is Inner membrane protein YbiR (ybiR).